The following is a 205-amino-acid chain: Small ribosomal subunit protein uS4 (205 aa).

The tract at residues 18 to 46 (NIWGRPKSPVNRREYGPGQHGQRRKGKLS) is disordered. One can recognise an S4 RNA-binding domain in the interval 94–157 (RRLDTVVYRA…KQLTFVLEAN (64 aa)).

Belongs to the universal ribosomal protein uS4 family. In terms of assembly, part of the 30S ribosomal subunit. Contacts protein S5. The interaction surface between S4 and S5 is involved in control of translational fidelity.

Its function is as follows. One of the primary rRNA binding proteins, it binds directly to 16S rRNA where it nucleates assembly of the body of the 30S subunit. Functionally, with S5 and S12 plays an important role in translational accuracy. The chain is Small ribosomal subunit protein uS4 from Rhodopseudomonas palustris (strain BisB18).